Here is a 152-residue protein sequence, read N- to C-terminus: Ribonuclease H (152 aa).

The region spanning 1-142 (MGSKVVIYTD…ADKLAVQGRE (142 aa)) is the RNase H type-1 domain. Asp10, Glu48, Asp70, and Asp134 together coordinate Mg(2+).

The protein belongs to the RNase H family. Monomer. Mg(2+) serves as cofactor.

Its subcellular location is the cytoplasm. The catalysed reaction is Endonucleolytic cleavage to 5'-phosphomonoester.. Functionally, endonuclease that specifically degrades the RNA of RNA-DNA hybrids. In Rickettsia massiliae (strain Mtu5), this protein is Ribonuclease H.